Here is a 270-residue protein sequence, read N- to C-terminus: Neurotrophic factor BDNF precursor form (270 aa).

A signal peptide spans 1–18 (MTILFVTMVISYFSCMRA). Residues 19-151 (APMREIPGVQ…AANMSMRVRR (133 aa)) constitute a propeptide that is removed on maturation. An N-linked (GlcNAc...) asparagine glycan is attached at asparagine 144. Cystine bridges form between cysteine 164–cysteine 231, cysteine 209–cysteine 260, and cysteine 219–cysteine 262.

This sequence belongs to the NGF-beta family.

Its subcellular location is the secreted. Promotes the survival of neuronal populations that are all located either in the central nervous system or directly connected to it. This Cyprinus carpio (Common carp) protein is Neurotrophic factor BDNF precursor form (bdnf).